Reading from the N-terminus, the 218-residue chain is LOB domain-containing protein 29 (218 aa).

In terms of domain architecture, LOB spans 10–112 (SPCGACKFLR…AELEILKQQA (103 aa)).

Belongs to the LOB domain-containing protein family. Expressed in roots.

In terms of biological role, involved in lateral root formation. Regulated by the transcriptional activators ARF7 and ARF19. This is LOB domain-containing protein 29 (LBD29) from Arabidopsis thaliana (Mouse-ear cress).